Reading from the N-terminus, the 406-residue chain is Elongation factor Tu, chloroplastic (406 aa).

The tr-type G domain occupies lysine 8–lysine 210. GTP-binding positions include glycine 17–threonine 24, aspartate 77–histidine 81, and asparagine 132–aspartate 135. Residue threonine 24 coordinates Mg(2+).

Belongs to the TRAFAC class translation factor GTPase superfamily. Classic translation factor GTPase family. EF-Tu/EF-1A subfamily. Monomer.

It is found in the plastid. It localises to the chloroplast. It catalyses the reaction GTP + H2O = GDP + phosphate + H(+). Its function is as follows. GTP hydrolase that promotes the GTP-dependent binding of aminoacyl-tRNA to the A-site of ribosomes during protein biosynthesis. The polypeptide is Elongation factor Tu, chloroplastic (tufA) (Chaetosphaeridium globosum (Charophycean green alga)).